The following is a 158-amino-acid chain: Dysbindin domain-containing protein 1 (158 aa).

2 disordered regions span residues 1-50 (MEPP…VPAP) and 93-158 (ADSD…PQED). Phosphoserine is present on residues S95 and S119. Basic and acidic residues predominate over residues 125–141 (TRAEQSHEKQPLGDPER).

This sequence belongs to the dysbindin family.

In Homo sapiens (Human), this protein is Dysbindin domain-containing protein 1 (DBNDD1).